We begin with the raw amino-acid sequence, 172 residues long: Putative metal-dependent hydrolase OB0782 (172 aa).

Residues His-64, His-155, and His-159 each coordinate Zn(2+).

The protein belongs to the metal hydrolase YfiT family. In terms of assembly, homodimer. Zn(2+) serves as cofactor.

It is found in the cytoplasm. Its function is as follows. Possible metal-dependent hydrolase. The sequence is that of Putative metal-dependent hydrolase OB0782 from Oceanobacillus iheyensis (strain DSM 14371 / CIP 107618 / JCM 11309 / KCTC 3954 / HTE831).